A 269-amino-acid chain; its full sequence is C-type lectin domain family 1 member A (269 aa).

Over Met1–Leu51 the chain is Cytoplasmic. The chain crosses the membrane as a helical; Signal-anchor for type II membrane protein span at residues Thr52–Phe72. The Extracellular portion of the chain corresponds to Gln73 to Gln269. 4 N-linked (GlcNAc...) asparagine glycosylation sites follow: Asn94, Asn126, Asn168, and Asn202. Residues Tyr143–Glu257 form the C-type lectin domain. 2 cysteine pairs are disulfide-bonded: Cys164–Cys256 and Cys235–Cys248.

It is found in the membrane. The protein is C-type lectin domain family 1 member A (Clec1a) of Mus musculus (Mouse).